Reading from the N-terminus, the 492-residue chain is Bifunctional protein GlmU (492 aa).

Residues 1 to 241 are pyrophosphorylase; it reads MIPENTGPAA…RWQVEGANDR (241 aa). UDP-N-acetyl-alpha-D-glucosamine contacts are provided by residues 14-17, lysine 28, glutamine 81, 86-87, 112-114, glycine 151, glutamate 166, asparagine 181, and asparagine 239; these read LAAG, GT, and YGD. Aspartate 114 contributes to the Mg(2+) binding site. A Mg(2+)-binding site is contributed by asparagine 239. Residues 242–262 are linker; sequence VQLAALGAELNRRTVEAWMRA. Residues 263–492 form an N-acetyltransferase region; it reads GVTVVDPSTT…STPASTEEGK (230 aa). Residues arginine 344 and lysine 362 each contribute to the UDP-N-acetyl-alpha-D-glucosamine site. Histidine 374 functions as the Proton acceptor in the catalytic mechanism. UDP-N-acetyl-alpha-D-glucosamine-binding residues include tyrosine 377 and asparagine 388. Residues 397 to 398, serine 416, and alanine 434 contribute to the acetyl-CoA site; that span reads NY. The segment at 460 to 492 is disordered; sequence WVPANRPGSRSAELAQAAINNSSSTPASTEEGK. The span at 477-492 shows a compositional bias: polar residues; it reads AINNSSSTPASTEEGK.

In the N-terminal section; belongs to the N-acetylglucosamine-1-phosphate uridyltransferase family. This sequence in the C-terminal section; belongs to the transferase hexapeptide repeat family. As to quaternary structure, homotrimer. Mg(2+) is required as a cofactor.

It is found in the cytoplasm. The enzyme catalyses alpha-D-glucosamine 1-phosphate + acetyl-CoA = N-acetyl-alpha-D-glucosamine 1-phosphate + CoA + H(+). The catalysed reaction is N-acetyl-alpha-D-glucosamine 1-phosphate + UTP + H(+) = UDP-N-acetyl-alpha-D-glucosamine + diphosphate. The protein operates within nucleotide-sugar biosynthesis; UDP-N-acetyl-alpha-D-glucosamine biosynthesis; N-acetyl-alpha-D-glucosamine 1-phosphate from alpha-D-glucosamine 6-phosphate (route II): step 2/2. It functions in the pathway nucleotide-sugar biosynthesis; UDP-N-acetyl-alpha-D-glucosamine biosynthesis; UDP-N-acetyl-alpha-D-glucosamine from N-acetyl-alpha-D-glucosamine 1-phosphate: step 1/1. It participates in bacterial outer membrane biogenesis; LPS lipid A biosynthesis. In terms of biological role, catalyzes the last two sequential reactions in the de novo biosynthetic pathway for UDP-N-acetylglucosamine (UDP-GlcNAc). The C-terminal domain catalyzes the transfer of acetyl group from acetyl coenzyme A to glucosamine-1-phosphate (GlcN-1-P) to produce N-acetylglucosamine-1-phosphate (GlcNAc-1-P), which is converted into UDP-GlcNAc by the transfer of uridine 5-monophosphate (from uridine 5-triphosphate), a reaction catalyzed by the N-terminal domain. This chain is Bifunctional protein GlmU, found in Pseudarthrobacter chlorophenolicus (strain ATCC 700700 / DSM 12829 / CIP 107037 / JCM 12360 / KCTC 9906 / NCIMB 13794 / A6) (Arthrobacter chlorophenolicus).